The sequence spans 428 residues: Glutamate-1-semialdehyde 2,1-aminomutase (428 aa).

Position 267 is an N6-(pyridoxal phosphate)lysine (K267).

Belongs to the class-III pyridoxal-phosphate-dependent aminotransferase family. HemL subfamily. As to quaternary structure, homodimer. Pyridoxal 5'-phosphate is required as a cofactor.

It localises to the cytoplasm. It catalyses the reaction (S)-4-amino-5-oxopentanoate = 5-aminolevulinate. Its pathway is porphyrin-containing compound metabolism; protoporphyrin-IX biosynthesis; 5-aminolevulinate from L-glutamyl-tRNA(Glu): step 2/2. This is Glutamate-1-semialdehyde 2,1-aminomutase from Trichlorobacter lovleyi (strain ATCC BAA-1151 / DSM 17278 / SZ) (Geobacter lovleyi).